The sequence spans 1203 residues: Protein patched homolog 2 (1203 aa).

The Cytoplasmic segment spans residues 1-57 (MTRSPPLRELPPSYTPPARTAAPQILAGSLKAPLWLRAYFQGLLFSLGCGIQRHCGK). A helical membrane pass occupies residues 58–78 (VLFLGLLAFGALALGLRMAII). At 79–392 (ETNLEQLWVE…LDDILHAFSE (314 aa)) the chain is on the extracellular side. The N-linked (GlcNAc...) asparagine glycan is linked to Asn370. A helical transmembrane segment spans residues 393-413 (VSAARVVGGYLLMLAYACVTM). One can recognise an SSD domain in the interval 394 to 552 (SAARVVGGYL…MLVFPAILSL (159 aa)). The Cytoplasmic segment spans residues 414–428 (LRWDCAQSQGSVGLA). The chain crosses the membrane as a helical span at residues 429–449 (GVLLVALAVASGLGLCALLGI). The Extracellular segment spans residues 450–457 (TFNAATTQ). Residues 458–478 (VLPFLALGIGVDDVFLLAHAF) traverse the membrane as a helical segment. Over 479–501 (TEALPGTPLQERMGECLQRTGTS) the chain is Cytoplasmic. A helical transmembrane segment spans residues 502 to 522 (VVLTSINNMAAFLMAALVPIP). Residues 523 to 531 (ALRAFSLQA) are Extracellular-facing. A helical transmembrane segment spans residues 532-552 (AIVVGCTFVAVMLVFPAILSL). At 553–686 (DLRRRHCQRL…APLLLQSHAK (134 aa)) the chain is on the cytoplasmic side. Residues 687–707 (AIVLVLFGALLGLSLYGATLV) traverse the membrane as a helical segment. The Extracellular portion of the chain corresponds to 708–963 (QDGLALTDVV…WEQYLGLRRC (256 aa)). The N-linked (GlcNAc...) asparagine glycan is linked to Asn812. A helical membrane pass occupies residues 964–984 (FLLAVCILLVCTFLVCALLLL). Over 985-991 (NPWTAGL) the chain is Cytoplasmic. A helical transmembrane segment spans residues 992 to 1012 (IVLVLAMMTVELFGIMGFLGI). A topological domain (extracellular) is located at residue Lys1013. A helical membrane pass occupies residues 1014-1034 (LSAIPVVILVASVGIGVEFTV). At 1035 to 1064 (HVALGFLTTQGSRNLRAAHALEHTFAPVTD) the chain is on the cytoplasmic side. A helical membrane pass occupies residues 1065–1085 (GAISTLLGLLMLAGSHFDFIV). At 1086–1093 (RYFFAALT) the chain is on the extracellular side. A helical transmembrane segment spans residues 1094–1114 (VLTLLGLLHGLVLLPVLLSIL). Over 1115-1203 (GPPPEVIQMY…SSRGPGPATG (89 aa)) the chain is Cytoplasmic. A disordered region spans residues 1171–1203 (GAYIHPAPDEPPWSPAATSSGNLSSRGPGPATG). The segment covering 1186-1195 (AATSSGNLSS) has biased composition (polar residues).

Belongs to the patched family.

The protein localises to the membrane. Its function is as follows. Plays a role in the control of cellular growth. May have a role in epidermal development. May act as a receptor for Sonic hedgehog (SHH). This chain is Protein patched homolog 2 (PTCH2), found in Homo sapiens (Human).